The following is an 840-amino-acid chain: E3 ubiquitin-protein ligase SH3RF1 (840 aa).

An RING-type zinc finger spans residues 12–53 (CPVCLERLDASAKVLPCQHTFCKRCLLGIVGSRNELRCPECR). A disordered region spans residues 105–129 (VTCSPKDGPSSQGGPQPRAQAWSPP). SH3 domains lie at 134 to 193 (PQLP…IIKP) and 196 to 259 (QPPP…FNSA). Disordered regions lie at residues 267-324 (DQPP…RHSM), 394-442 (TLNP…PRPS), 516-545 (GPAS…VAGG), 578-633 (QARS…AASG), 652-723 (AASL…LGAE), and 744-773 (MAPG…SLGP). Over residues 273-282 (GVAAGEGALA) the composition is skewed to low complexity. Residues 283–292 (TTPSSTTTKQ) are compositionally biased toward polar residues. The segment at 292–362 (QPDGKKNTKK…APSQVHISTT (71 aa)) is interaction with RAC1. Ser304 is modified (phosphoserine). 2 stretches are compositionally biased toward low complexity: residues 307-320 (SLSM…AAQQ) and 405-424 (QAAT…GPRP). The tract at residues 434–537 (HPRPQPRPSV…PSTGGPAQKP (104 aa)) is interaction with AKT2. In terms of domain architecture, SH3 3 spans 439–500 (PRPSVYVAIY…PGNYVAPVTR (62 aa)). Positions 616 to 625 (SPQPPAPLGP) are enriched in pro residues. Residues 681-692 (RPDKDGKKEKKG) show a composition bias toward basic and acidic residues. Ser709 is modified (phosphoserine). The SH3 4 domain occupies 781 to 840 (AVCERHRVVVSYPPQSEAELELKEGDIVFVHKKREDGWFKGTLQRNGKTGLFPGSFVENI).

It belongs to the SH3RF family. As to quaternary structure, interacts with RAC1; in a GTP-dependent manner. Interacts with MAP3K10/MLK2 and MAP3K11/MLK3. Interacts with MAPK8IP; this interaction leads to the PJAC complex (POSH-JIP or SH3RF1/MAPK8IP apoptotic complex) with a 1:1 ratio. Interacts with SIAH1. Interacts with HERP1. Probably part of a signaling complex that may contain SH3RF1, MAPK8IP, DLK1, MAP2K4/MKK4, MAP2K7/MKK7, MAPK8/JNK1, MAPK9/JNK2, AKT1 and AKT2. Found in a complex with RAC2, MAP3K7/TAK1, MAP2K7/MKK7, MAPK8IP1/JIP1, MAPK8/JNK1 and MAPK9/JNK2. Found in a complex with RAC1, MAP3K11/MLK3, MAP2K7/MKK7, MAPK8IP1/JIP1 and MAPK8/JNK1. Interacts with SH3RF2. Phosphorylated at Ser-304 by AKT1 and AKT2. When phosphorylated, it has reduced ability to bind Rac. Post-translationally, autoubiquitinated. Ubiquitinated by SH3RF2, leading to proteasome-mediated degradation.

Its subcellular location is the cytoplasm. The protein localises to the perinuclear region. It localises to the cell projection. It is found in the lamellipodium. The protein resides in the golgi apparatus. Its subcellular location is the trans-Golgi network. The enzyme catalyses S-ubiquitinyl-[E2 ubiquitin-conjugating enzyme]-L-cysteine + [acceptor protein]-L-lysine = [E2 ubiquitin-conjugating enzyme]-L-cysteine + N(6)-ubiquitinyl-[acceptor protein]-L-lysine.. It participates in protein modification; protein ubiquitination. Functionally, has E3 ubiquitin-protein ligase activity. In the absence of an external substrate, it can catalyze self-ubiquitination. Stimulates ubiquitination of potassium channel KCNJ1, enhancing it's dynamin-dependent and clathrin-independent endocytosis. Acts as a scaffold protein that coordinates with MAPK8IP1/JIP1 in organizing different components of the JNK pathway, including RAC1 or RAC2, MAP3K11/MLK3 or MAP3K7/TAK1, MAP2K7/MKK7, MAPK8/JNK1 and/or MAPK9/JNK2 into a functional multiprotein complex to ensure the effective activation of the JNK signaling pathway. Regulates the differentiation of CD4(+) and CD8(+) T-cells and promotes T-helper 1 (Th1) cell differentiation. Regulates the activation of MAPK8/JNK1 and MAPK9/JNK2 in CD4(+) T-cells and the activation of MAPK8/JNK1 in CD8(+) T-cells. Plays a crucial role in the migration of neocortical neurons in the developing brain. Controls proper cortical neuronal migration and the formation of proximal cytoplasmic dilation in the leading process (PCDLP) in migratory neocortical neurons by regulating the proper localization of activated RAC1 and F-actin assembly. The sequence is that of E3 ubiquitin-protein ligase SH3RF1 (SH3RF1) from Bos taurus (Bovine).